The chain runs to 673 residues: UvrABC system protein B (673 aa).

Residues 26-183 (EGLEDGLAHQ…RRLAELQYTR (158 aa)) form the Helicase ATP-binding domain. 39–46 (GVTGSGKT) contacts ATP. The Beta-hairpin signature appears at 92–115 (YYDYYQPEAYVPSSDTFIEKDASV). Residues 431-597 (QVDDLLSEIR…GLNKKVVDIL (167 aa)) enclose the Helicase C-terminal domain. In terms of domain architecture, UVR spans 633–668 (QQKIHELEGQMMQHAQNLEFEEAAQIRDQLHQLREL).

This sequence belongs to the UvrB family. As to quaternary structure, forms a heterotetramer with UvrA during the search for lesions. Interacts with UvrC in an incision complex.

The protein localises to the cytoplasm. Its function is as follows. The UvrABC repair system catalyzes the recognition and processing of DNA lesions. A damage recognition complex composed of 2 UvrA and 2 UvrB subunits scans DNA for abnormalities. Upon binding of the UvrA(2)B(2) complex to a putative damaged site, the DNA wraps around one UvrB monomer. DNA wrap is dependent on ATP binding by UvrB and probably causes local melting of the DNA helix, facilitating insertion of UvrB beta-hairpin between the DNA strands. Then UvrB probes one DNA strand for the presence of a lesion. If a lesion is found the UvrA subunits dissociate and the UvrB-DNA preincision complex is formed. This complex is subsequently bound by UvrC and the second UvrB is released. If no lesion is found, the DNA wraps around the other UvrB subunit that will check the other stand for damage. This chain is UvrABC system protein B, found in Klebsiella pneumoniae subsp. pneumoniae (strain ATCC 700721 / MGH 78578).